The primary structure comprises 185 residues: Thymidine kinase (185 aa).

Gly-17 to Thr-24 is a binding site for ATP. The active-site Proton acceptor is Glu-92. Phe-121 is a binding site for substrate. Zn(2+)-binding residues include Cys-146 and Cys-149. A substrate-binding site is contributed by Leu-166–Gly-170. Zn(2+)-binding residues include Cys-179 and Cys-182.

Belongs to the thymidine kinase family.

It catalyses the reaction thymidine + ATP = dTMP + ADP + H(+). Its function is as follows. Phosphorylates thymidine. ASFV replicates in the cytoplasm of infected cells and contains genes encoding a number of enzymes needed for DNA synthesis, including thymidine kinase. Important for growth in swine macrophages in vitro and is a virus virulence factor in swine. In African swine fever virus (isolate Pig/Kenya/KEN-50/1950) (ASFV), this protein is Thymidine kinase.